The chain runs to 689 residues: Glycine--tRNA ligase beta subunit (689 aa).

It belongs to the class-II aminoacyl-tRNA synthetase family. Tetramer of two alpha and two beta subunits.

Its subcellular location is the cytoplasm. It catalyses the reaction tRNA(Gly) + glycine + ATP = glycyl-tRNA(Gly) + AMP + diphosphate. The polypeptide is Glycine--tRNA ligase beta subunit (Shigella dysenteriae serotype 1 (strain Sd197)).